We begin with the raw amino-acid sequence, 1357 residues long: Protein CFT1 (1357 aa).

Residues 445 to 465 form a disordered region; it reads TREAHNPSSGTNSLMDINDDD. The segment covering 450–459 has biased composition (polar residues); sequence NPSSGTNSLM.

It belongs to the CFT1 family. As to quaternary structure, component of the cleavage and polyadenylation factor (CPF) complex, which is composed of at least PTI1, SYC1, SSU72, GLC7, MPE1, REF2, PFS2, PTA1, YSH1/BRR5, SWD2, CFT2/YDH1, YTH1, CFT1/YHH1, FIP1 and PAP1. Interacts with the phosphorylated CTD domain of RPB1/RNA polymerase II.

Its subcellular location is the nucleus. Functionally, RNA-binding component of the cleavage and polyadenylation factor (CPF) complex, which plays a key role in polyadenylation-dependent pre-mRNA 3'-end formation and cooperates with cleavage factors including the CFIA complex and NAB4/CFIB. Involved in poly(A) site recognition. May be involved in coupling transcription termination and mRNA 3'-end formation. This Saccharomyces cerevisiae (strain ATCC 204508 / S288c) (Baker's yeast) protein is Protein CFT1 (CFT1).